We begin with the raw amino-acid sequence, 141 residues long: ATP synthase epsilon chain (141 aa).

This sequence belongs to the ATPase epsilon chain family. As to quaternary structure, F-type ATPases have 2 components, CF(1) - the catalytic core - and CF(0) - the membrane proton channel. CF(1) has five subunits: alpha(3), beta(3), gamma(1), delta(1), epsilon(1). CF(0) has three main subunits: a, b and c.

Its subcellular location is the cell inner membrane. In terms of biological role, produces ATP from ADP in the presence of a proton gradient across the membrane. The chain is ATP synthase epsilon chain from Hahella chejuensis (strain KCTC 2396).